The chain runs to 1166 residues: Calcium-activated potassium channel subunit alpha-1 (1166 aa).

Gly residues predominate over residues 1–15 (MANGGGGGGGGGGGS). Disordered stretches follow at residues 1 to 20 (MANGGGGGGGGGGGSSLRMS) and 30 to 51 (LDASSSSSSSSSSSSSSSSVHE). The Extracellular segment spans residues 1 to 74 (MANGGGGGGG…VPCDSRGQRM (74 aa)). Over residues 33–48 (SSSSSSSSSSSSSSSS) the composition is skewed to low complexity. A helical membrane pass occupies residues 75–95 (WWAFLASSMVTFFGGLFIILL). The Cytoplasmic segment spans residues 96–166 (WRTLKYLWTV…MISAQTLTGR (71 aa)). S-palmitoyl cysteine attachment occurs at residues Cys106, Cys107, and Cys109. Thr139 carries the post-translational modification Phosphothreonine; by CamK2. The chain crosses the membrane as a helical span at residues 167 to 187 (VLVVLVFALSIGALVIYFIDS). The Extracellular segment spans residues 188 to 202 (SNPIESCQNFYKDFT). The helical transmembrane segment at 203-223 (LQIDMAFNVFFLLYFGLRFIA) threads the bilayer. Residues 224–227 (ANDK) lie on the Cytoplasmic side of the membrane. The chain crosses the membrane as a helical span at residues 228 to 248 (LWFWLEVNSVVDFFTVPPVFV). Over 249–252 (SVYL) the chain is Extracellular. The chain crosses the membrane as a helical; Voltage-sensor span at residues 253–273 (NRSWLGLRFLRALRLIQFSEI). Over 274–288 (LQFLNILKTSNSIKL) the chain is Cytoplasmic. Residues 289 to 309 (VNLLSIFISTWLTAAGFIHLV) form a helical membrane-spanning segment. At 310–323 (ENSGDPWENFQNNQ) the chain is on the extracellular side. Residues 324-346 (ALTYWECVYLLMVTMSTVGYGDV) constitute an intramembrane region (pore-forming). The Selectivity for potassium motif lies at 340–343 (TVGY). Over 347-355 (YAKTTLGRL) the chain is Extracellular. The chain crosses the membrane as a helical span at residues 356–376 (FMVFFILGGLAMFASYVPEII). Residues 377-1166 (ELIGNRKKYG…KQKYVQEERL (790 aa)) lie on the Cytoplasmic side of the membrane. In terms of domain architecture, RCK N-terminal 1 spans 395–537 (RKHIVVCGHI…WNWKEGDDAI (143 aa)). Mg(2+) is bound by residues Glu427, Gln450, and Glu452. Residues 544-564 (LGFIAQSCLAQGLSTMLANLF) form a segment S7 region. Residues 601–621 (LSFPTVCELCFVKLKLLMIAI) are segment S8. Residues 665 to 669 (CKACH) are heme-binding motif. A disordered region spans residues 689–717 (EQPSTLSPKKKQRNGGMRNSPSSSPKLMR). Thr693 is subject to Phosphothreonine. Residues Ser695, Ser708, and Ser712 each carry the phosphoserine modification. Positions 767-787 (VLSGHVVVCIFGDVSSALIGL) are segment S9. The RCK N-terminal 2 domain occupies 769–913 (SGHVVVCIFG…MDRSSPDNSP (145 aa)). Phosphothreonine is present on Thr900. Residues Ser908 and Ser912 each carry the phosphoserine modification. A Calcium bowl motif is present at residues 933 to 955 (TELVNDTNVQFLDQDDDDDPDTE). Ca(2+)-binding residues include Gln942, Asp945, Asp948, and Asp950. The tract at residues 962-982 (FACGTAFAVSVLDSLMSATYF) is segment S10. Low complexity predominate over residues 1116–1141 (RASLSHSSHSSQSSSKKSSSVHSIPS). The interval 1116-1166 (RASLSHSSHSSQSSSKKSSSVHSIPSTANRQNRPKSRESRDKQKYVQEERL) is disordered. Basic and acidic residues predominate over residues 1150 to 1166 (KSRESRDKQKYVQEERL). Phosphoserine; by PKG is present on residues Ser1151 and Ser1154.

The protein belongs to the potassium channel family. Calcium-activated (TC 1.A.1.3) subfamily. KCa1.1/KCNMA1 sub-subfamily. In terms of assembly, homotetramer; which constitutes the calcium-activated potassium channel. Interacts with beta subunits KCNMB1, KCNMB2, KCNMB3 and KCNMB4. Interacts with gamma subunits LRRC26, LRRC38, LRRC52 and LRRC55. Beta and gamma subunits are accessory, and modulate its activity. Interacts with RAB11B. Post-translationally, phosphorylated. Stimulated by PKG, but not by PKA. In smooth muscles, phosphorylation affects its activity. In terms of processing, phosphorylated. Exclusively stimulated by PKA. In smooth muscles, phosphorylation affects its activity. Incremental phosphorylation of Thr-139 of the KCNMA1 tetramer changes the response to ethanol from increased activation to inhibition of channel activity. Post-translationally, palmitoylation by ZDHHC22 and ZDHHC23 within the intracellular linker between the S0 and S1 transmembrane domains regulates localization to the plasma membrane. Depalmitoylated by LYPLA1 and LYPLAL1, leading to retard exit from the trans-Golgi network.

It is found in the cell membrane. It carries out the reaction K(+)(in) = K(+)(out). Ethanol and carbon monoxide-bound heme increase channel activation. Heme inhibits channel activation. Phosphorylation of Thr-139 leads to inhibition of channel activity by ethanol. Its function is as follows. Potassium channel activated by both membrane depolarization or increase in cytosolic Ca(2+) that mediates export of K(+). It is also activated by concentration of cytosolic Mg(2+). Its activation dampens the excitatory events that elevate the cytosolic Ca(2+) concentration and/or depolarize the cell membrane. It therefore contributes to repolarization of the membrane potential. Plays a key role in controlling excitability in a number of systems, such as regulation of the contraction of smooth muscle, the tuning of hair cells in the cochlea, regulation of transmitter release, and innate immunity. In smooth muscles, its activation by high level of Ca(2+), caused by ryanodine receptors in the sarcoplasmic reticulum, regulates the membrane potential. In cochlea cells, its number and kinetic properties partly determine the characteristic frequency of each hair cell and thereby helps to establish a tonotopic map. Kinetics of KCNMA1 channels are determined by alternative splicing, phosphorylation status and its combination with modulating beta subunits. Highly sensitive to both iberiotoxin (IbTx) and charybdotoxin (CTX). The protein is Calcium-activated potassium channel subunit alpha-1 (KCNMA1) of Bos taurus (Bovine).